We begin with the raw amino-acid sequence, 644 residues long: ATP-dependent zinc metalloprotease FtsH (644 aa).

The Cytoplasmic segment spans residues 1-4; the sequence is MAKN. The chain crosses the membrane as a helical span at residues 5–25; sequence LILWLVIAVVLMSVFQSFGPS. Residues 26-98 lie on the Periplasmic side of the membrane; that stretch reads ESNGRKVDYS…VGEPPEEPSL (73 aa). Residues 99 to 119 traverse the membrane as a helical segment; the sequence is LASIFISWFPMLLLIGVWIFF. The Cytoplasmic segment spans residues 120–644; sequence MRQMQGGGGK…NTMSEQLGDK (525 aa). 192–199 contacts ATP; sequence GPPGTGKT. His-414 is a binding site for Zn(2+). Glu-415 is a catalytic residue. The Zn(2+) site is built by His-418 and Asp-492. The tract at residues 599 to 644 is disordered; that stretch reads RPPAGWEDPNGTNNSDSNGTPQAPRPVDEPRTPNPGNTMSEQLGDK. Composition is skewed to polar residues over residues 608–619 and 632–644; these read NGTNNSDSNGTP and NPGNTMSEQLGDK.

This sequence in the central section; belongs to the AAA ATPase family. It in the C-terminal section; belongs to the peptidase M41 family. As to quaternary structure, homohexamer. Zn(2+) is required as a cofactor.

The protein resides in the cell inner membrane. Its function is as follows. Acts as a processive, ATP-dependent zinc metallopeptidase for both cytoplasmic and membrane proteins. Plays a role in the quality control of integral membrane proteins. This chain is ATP-dependent zinc metalloprotease FtsH, found in Salmonella typhi.